Here is an 808-residue protein sequence, read N- to C-terminus: Copal-8-ol diphosphate hydratase, chloroplastic (808 aa).

The transit peptide at 1–50 (MAFTFTSAHLFLPVTENHSVHVNYSIPPGNWRLWSTAKGGSNKLDIRRLR) directs the protein to the chloroplast. Residues 190-219 (DKCQKGLKFFRDNISKLEKENVEASAQMLS) adopt a coiled-coil conformation. Residue K256 participates in substrate binding. D391 and D393 together coordinate Mg(2+). Residues 391–394 (DLDD) carry the DXDD motif motif. A substrate-binding site is contributed by K477.

The protein belongs to the terpene synthase family. The cofactor is Mg(2+). In terms of tissue distribution, expressed in stems, leaves and trichomes. Not detected in roots and seeds. Higher expression in young leaves than in fully expanded leaves.

It is found in the plastid. It localises to the chloroplast. It carries out the reaction (2E,6E,10E)-geranylgeranyl diphosphate + H2O = 8-hydroxycopalyl diphosphate. The protein operates within secondary metabolite biosynthesis; terpenoid biosynthesis. In terms of biological role, involved in the biosynthesis of oxygen-containing labdane-type diterpenes that may be implicated in direct and indirect defense mechanisms. No activity with geranyl diphosphate or farnesyl diphosphate as substrate. This is Copal-8-ol diphosphate hydratase, chloroplastic from Cistus creticus subsp. creticus (Rock rose).